Reading from the N-terminus, the 621-residue chain is Glutathione-regulated potassium-efflux system protein KefC (621 aa).

12 helical membrane-spanning segments follow: residues 4–24 (HTLIQALIYLGAAALIVPVAV), 26–46 (LGLGSVLGYLIAGCIIGPWGF), 54–74 (SILHFAEIGVVLMLFVIGLEL), 90–110 (GALQMIACGALLGGFCILLGM), 114–134 (VAELIGMTLALSSTAIAMQAM), 151–171 (VLLFQDIAAIPLVAMIPLLAV), 178–198 (LGAFALSALKVAGALALVILL), 218–238 (VFSAVALFLVFGFGLLLEEAG), 270–290 (GLLLGLFFIGVGMSVDFGTLV), 294–314 (LRILILLVGFLVIKMGMLWLI), 327–347 (WFAVLLGQGSEFAFVVFGAAQ), and 359–379 (ALTLAVALSMAVTPILLVLLT). Positions 399–518 (QPRVIIAGFG…AGVETPERET (120 aa)) constitute an RCK N-terminal domain. The tract at residues 591–621 (LSLTQRHGWQGTEEGKHTGDPRDEPESKPTV) is disordered. The segment covering 603 to 621 (EEGKHTGDPRDEPESKPTV) has biased composition (basic and acidic residues).

The protein belongs to the monovalent cation:proton antiporter 2 (CPA2) transporter (TC 2.A.37) family. KefC subfamily. As to quaternary structure, homodimer. Interacts with the regulatory subunit KefF.

It localises to the cell inner membrane. In terms of biological role, pore-forming subunit of a potassium efflux system that confers protection against electrophiles. Catalyzes K(+)/H(+) antiport. The polypeptide is Glutathione-regulated potassium-efflux system protein KefC (Enterobacter sp. (strain 638)).